Consider the following 216-residue polypeptide: Leucyl/phenylalanyl-tRNA--protein transferase (216 aa).

This sequence belongs to the L/F-transferase family.

The protein localises to the cytoplasm. It carries out the reaction N-terminal L-lysyl-[protein] + L-leucyl-tRNA(Leu) = N-terminal L-leucyl-L-lysyl-[protein] + tRNA(Leu) + H(+). The enzyme catalyses N-terminal L-arginyl-[protein] + L-leucyl-tRNA(Leu) = N-terminal L-leucyl-L-arginyl-[protein] + tRNA(Leu) + H(+). It catalyses the reaction L-phenylalanyl-tRNA(Phe) + an N-terminal L-alpha-aminoacyl-[protein] = an N-terminal L-phenylalanyl-L-alpha-aminoacyl-[protein] + tRNA(Phe). In terms of biological role, functions in the N-end rule pathway of protein degradation where it conjugates Leu, Phe and, less efficiently, Met from aminoacyl-tRNAs to the N-termini of proteins containing an N-terminal arginine or lysine. The sequence is that of Leucyl/phenylalanyl-tRNA--protein transferase from Maricaulis maris (strain MCS10) (Caulobacter maris).